Reading from the N-terminus, the 302-residue chain is Capsid protein (302 aa).

Positions 217–302 are disordered; the sequence is FHSGDAAKQS…HSSPQQTPKK (86 aa). Over residues 254 to 271 the composition is skewed to low complexity; the sequence is PRAGTPSSQKSGQSGQTT. The segment covering 288-302 has biased composition (polar residues); it reads HKSTPHSSPQQTPKK.

Its subcellular location is the virion. Functionally, capsid protein self-assembles to form a flexuous, filamentous capsid (Potential). The capsid encapsulates the single-stranded RNA genome. In Botryotinia fuckeliana (Noble rot fungus), this protein is Capsid protein.